We begin with the raw amino-acid sequence, 671 residues long: DNA ligase (671 aa).

NAD(+) contacts are provided by residues 32–36 (DAEYD), 81–82 (SL), and glutamate 113. Lysine 115 functions as the N6-AMP-lysine intermediate in the catalytic mechanism. 4 residues coordinate NAD(+): arginine 136, glutamate 173, lysine 290, and lysine 314. Residues cysteine 408, cysteine 411, cysteine 426, and cysteine 432 each coordinate Zn(2+). One can recognise a BRCT domain in the interval 593–671 (EIDSPFAGKT…EAEMLRLLGV (79 aa)).

The protein belongs to the NAD-dependent DNA ligase family. LigA subfamily. Mg(2+) is required as a cofactor. The cofactor is Mn(2+).

The catalysed reaction is NAD(+) + (deoxyribonucleotide)n-3'-hydroxyl + 5'-phospho-(deoxyribonucleotide)m = (deoxyribonucleotide)n+m + AMP + beta-nicotinamide D-nucleotide.. In terms of biological role, DNA ligase that catalyzes the formation of phosphodiester linkages between 5'-phosphoryl and 3'-hydroxyl groups in double-stranded DNA using NAD as a coenzyme and as the energy source for the reaction. It is essential for DNA replication and repair of damaged DNA. The protein is DNA ligase of Salmonella arizonae (strain ATCC BAA-731 / CDC346-86 / RSK2980).